A 151-amino-acid chain; its full sequence is Probable ubiquitin-conjugating enzyme E2 W-A (151 aa).

Positions 3–151 (SMQKRLQKEL…TKWWYHDDTC (149 aa)) constitute a UBC core domain. Cys91 (glycyl thioester intermediate) is an active-site residue.

It belongs to the ubiquitin-conjugating enzyme family.

Its subcellular location is the nucleus. It catalyses the reaction S-ubiquitinyl-[E1 ubiquitin-activating enzyme]-L-cysteine + [E2 ubiquitin-conjugating enzyme]-L-cysteine = [E1 ubiquitin-activating enzyme]-L-cysteine + S-ubiquitinyl-[E2 ubiquitin-conjugating enzyme]-L-cysteine.. It carries out the reaction S-ubiquitinyl-[E1 ubiquitin-activating enzyme]-L-cysteine + [acceptor protein]-N-terminal-amino acid = [E1 ubiquitin-activating enzyme]-L-cysteine + N-terminal-ubiquitinyl-[acceptor protein].. It functions in the pathway protein modification; protein ubiquitination. In terms of biological role, accepts ubiquitin from the E1 complex and catalyzes its covalent attachment to other proteins. Catalyzes monoubiquitination. Involved in degradation of misfolded chaperone substrate and DNA repair. The chain is Probable ubiquitin-conjugating enzyme E2 W-A (ube2wa) from Danio rerio (Zebrafish).